The following is a 169-amino-acid chain: MLATRVFSLVGKRAISTSVCVRAHESVVKSEDFSLPAYMDRRDHPLPEVAHVKHLSASQKALKEKEKASWSSLSMDEKVELYRIKFKESFAEMNRGSNEWKTVVGGAMFFIGFTALVIMWQKHYVYGPLPQSFDKEWVAKQTKRMLDMKVNPIQGLASKWDYEKNEWKK.

The transit peptide at 1 to 22 directs the protein to the mitochondrion; the sequence is MLATRVFSLVGKRAISTSVCVR. Residues 23–98 are Mitochondrial matrix-facing; sequence AHESVVKSED…SFAEMNRGSN (76 aa). At K29 the chain carries N6-acetyllysine; alternate. An N6-succinyllysine; alternate modification is found at K29. Residue K53 is modified to N6-acetyllysine. Residues S56 and S58 each carry the phosphoserine modification. K60 carries the post-translational modification N6-acetyllysine; alternate. K60 is modified (N6-succinyllysine; alternate). K67 is subject to N6-acetyllysine. Residues 99–124 traverse the membrane as a helical segment; it reads EWKTVVGGAMFFIGFTALVIMWQKHY. The Mitochondrial intermembrane segment spans residues 125–169; that stretch reads VYGPLPQSFDKEWVAKQTKRMLDMKVNPIQGLASKWDYEKNEWKK.

This sequence belongs to the cytochrome c oxidase IV family. Component of the cytochrome c oxidase (complex IV, CIV), a multisubunit enzyme composed of 14 subunits. The complex is composed of a catalytic core of 3 subunits MT-CO1, MT-CO2 and MT-CO3, encoded in the mitochondrial DNA, and 11 supernumerary subunits COX4I1 (or COX4I2), COX5A, COX5B, COX6A1 (or COX6A2), COX6B1 (or COX6B2), COX6C, COX7A2 (or COX7A1), COX7B, COX7C, COX8A and NDUFA4, which are encoded in the nuclear genome. The complex exists as a monomer or a dimer and forms supercomplexes (SCs) in the inner mitochondrial membrane with NADH-ubiquinone oxidoreductase (complex I, CI) and ubiquinol-cytochrome c oxidoreductase (cytochrome b-c1 complex, complex III, CIII), resulting in different assemblies (supercomplex SCI(1)III(2)IV(1) and megacomplex MCI(2)III(2)IV(2)). Interacts with AFG1L. Interacts with PHB2; the interaction decreases in absence of SPHK2. Interacts with ABCB7; this interaction allows the regulation of cellular iron homeostasis and cellular reactive oxygen species (ROS) levels in cardiomyocytes. Interacts with FLVCR2; this interaction occurs in the absence of heme and is disrupted upon heme binding. Interacts with IRGC. Ubiquitous.

Its subcellular location is the mitochondrion inner membrane. The protein operates within energy metabolism; oxidative phosphorylation. Its function is as follows. Component of the cytochrome c oxidase, the last enzyme in the mitochondrial electron transport chain which drives oxidative phosphorylation. The respiratory chain contains 3 multisubunit complexes succinate dehydrogenase (complex II, CII), ubiquinol-cytochrome c oxidoreductase (cytochrome b-c1 complex, complex III, CIII) and cytochrome c oxidase (complex IV, CIV), that cooperate to transfer electrons derived from NADH and succinate to molecular oxygen, creating an electrochemical gradient over the inner membrane that drives transmembrane transport and the ATP synthase. Cytochrome c oxidase is the component of the respiratory chain that catalyzes the reduction of oxygen to water. Electrons originating from reduced cytochrome c in the intermembrane space (IMS) are transferred via the dinuclear copper A center (CU(A)) of subunit 2 and heme A of subunit 1 to the active site in subunit 1, a binuclear center (BNC) formed by heme A3 and copper B (CU(B)). The BNC reduces molecular oxygen to 2 water molecules using 4 electrons from cytochrome c in the IMS and 4 protons from the mitochondrial matrix. The sequence is that of Cytochrome c oxidase subunit 4 isoform 1, mitochondrial from Homo sapiens (Human).